The chain runs to 861 residues: MAEVTIKQLAEDVGAPVERLLKQMVDAGLEKRGEGDIVTDSEKQKLLAFLKQSHGESFSEPKKITLKRKTTTTLKASGTGANRSINVEVRKKRTYIKRSEAVNDIDAQKQQDIQRAAEEAAAKERETEVEVALQNEPGMEATAEVVESVQQEAANMDTQEAEAAPQASVDESVSATTAGGSQEKAGVAADQEAEDAQKSEARKTSKHRRNKEDSEVRREPADAEDLKRREKHKPKPAPQLKSSKVIAIEEDDSSEEAPRRARQRKKKSKVVQDRSVQPIVREVVISDTITVAELAQKMSVKGVEVIKRLMGMGIMATLNQSIDQDVAQLVAEEMGHKVKLLQEDAVETEVLESISFEGESKSRAPVVSVMGHVDHGKTSLLDYIRRAKVAAQESGGITQHIGAYHVETPRGMISFLDTPGHAAFTAMRARGAQCTDIVILVVAADDGVMPQTQEAVQHAKAAGVPLVVAVNKMDKEQADPDRVKNELSALDVIPEEWGGDVQFVPVSAHTGDGIDDLLEAVLLQSEMLELTAVPDAPGKGVVIESSLDRGRGSVATVLVQNGTLRHGDIVLAGEYYGRVRAMVNENGQNVQEAGPSIPVEILGLNGTPDAGDEFIVVPDEKKAREVAEFRQNKERQTRLQRQQAASLENLFENMGKGGVKELNIVLKTDVRGSLEALIGALAEIGNEEVQVKIIASGVGGITETDANLALSTQAIIVGFNVRADASARKIVEKEGIELRYYSVIYNIIDDVKKALTGMLAPEFREDIVGTAEVRDTFKSPKFGQVAGCMVLEGAVYRNKPIRVLRDNVVIFEGELESLRRFKDDVAEVRAGTECGIGVRNYEVKVGDIIEVFDKIRVERSL.

The disordered stretch occupies residues alanine 107–glutamine 272. Basic and acidic residues predominate over residues arginine 115–glutamate 128. Polar residues-rich tracts occupy residues serine 148–threonine 158 and valine 169–glycine 180. A compositionally biased stretch (basic and acidic residues) spans asparagine 210–arginine 228. Residues arginine 260–lysine 269 are compositionally biased toward basic residues. Residues serine 362–threonine 531 enclose the tr-type G domain. Residues glycine 371–threonine 378 are G1. Position 371–378 (glycine 371–threonine 378) interacts with GTP. Positions glycine 396 to histidine 400 are G2. Positions aspartate 417–glycine 420 are G3. GTP contacts are provided by residues aspartate 417–histidine 421 and asparagine 471–aspartate 474. Residues asparagine 471–aspartate 474 are G4. Residues serine 507 to histidine 509 form a G5 region.

Belongs to the TRAFAC class translation factor GTPase superfamily. Classic translation factor GTPase family. IF-2 subfamily.

It is found in the cytoplasm. One of the essential components for the initiation of protein synthesis. Protects formylmethionyl-tRNA from spontaneous hydrolysis and promotes its binding to the 30S ribosomal subunits. Also involved in the hydrolysis of GTP during the formation of the 70S ribosomal complex. This is Translation initiation factor IF-2 from Hahella chejuensis (strain KCTC 2396).